The primary structure comprises 341 residues: MDVGELLEDVLRIYSPSHGEADLAKYLLEYLKRFVPDVWIDEAGNVIAVKGSGGPVVWLHAHMDTVPGPLPVKREGGVVWGRGAVDDKGPLVAYLKAFLDSNPRGTLVLALVTAEEDDSAGTEALLRGGPPRPDYVFVGEPTNLHIAYAYRGGAKVYIELESRGGHASSPIYDNIVEELFAVYQEVKRALGHAERYDAFTVTPTIIQCGEAPNKVPTKCVMVLDVRIPPGKSCRDLAQALPPKARAGPCTEPVEVSPTNPAARALTRALLKLGVEPKLSRKWGTADFNLLVSLTKNIAAFGPGDPALAHSEDERIDIAQVELAAKALKLAVEELGIIPRRL.

His62 lines the Zn(2+) pocket. Asp64 is an active-site residue. Asp86 contacts Zn(2+). The active-site Proton acceptor is the Glu115. The Zn(2+) site is built by Glu116, Glu140, and His309.

It belongs to the peptidase M20A family. LysK subfamily. Zn(2+) serves as cofactor. Co(2+) is required as a cofactor.

The protein localises to the cytoplasm. It carries out the reaction [amino-group carrier protein]-C-terminal-gamma-(L-lysyl)-L-glutamate + H2O = [amino-group carrier protein]-C-terminal-L-glutamate + L-lysine. The enzyme catalyses [amino-group carrier protein]-C-terminal-gamma-(L-ornithyl)-L-glutamate + H2O = [amino-group carrier protein]-C-terminal-L-glutamate + L-ornithine. Its pathway is amino-acid biosynthesis; L-lysine biosynthesis via AAA pathway; L-lysine from L-alpha-aminoadipate (Thermus route): step 5/5. It functions in the pathway amino-acid biosynthesis; L-arginine biosynthesis. Catalyzes the release of L-lysine from [LysW]-gamma-L-lysine and the release of L-ornithine from [LysW]-L-ornithine. This Pyrobaculum aerophilum (strain ATCC 51768 / DSM 7523 / JCM 9630 / CIP 104966 / NBRC 100827 / IM2) protein is Putative [LysW]-lysine/[LysW]-ornithine hydrolase.